Here is a 257-residue protein sequence, read N- to C-terminus: Flavodoxin/ferredoxin--NADP reductase (257 aa).

The FAD-binding FR-type domain maps to 2–110 (NPWINANVLK…EKSFGFFTLD (109 aa)). FAD-binding positions include 59-62 (RAYS), Tyr75, 83-85 (KLS), and Thr125. Residues 152 to 153 (VR), 182 to 183 (SR), Arg193, 223 to 225 (NPA), and Asp229 contribute to the NADP(+) site. 256–257 (YW) contributes to the FAD binding site.

This sequence belongs to the ferredoxin--NADP reductase type 1 family. FAD serves as cofactor.

It is found in the cytoplasm. It catalyses the reaction 2 reduced [2Fe-2S]-[ferredoxin] + NADP(+) + H(+) = 2 oxidized [2Fe-2S]-[ferredoxin] + NADPH. The enzyme catalyses reduced [flavodoxin] + NADP(+) = oxidized [flavodoxin] + NADPH + 2 H(+). Transports electrons between flavodoxin or ferredoxin and NADPH. The sequence is that of Flavodoxin/ferredoxin--NADP reductase (fpr) from Buchnera aphidicola subsp. Schizaphis graminum (strain Sg).